The chain runs to 228 residues: Ribosomal RNA small subunit methyltransferase G (228 aa).

S-adenosyl-L-methionine contacts are provided by residues Gly-89, Leu-94, 140 to 141, and Arg-159; that span reads VE.

The protein belongs to the methyltransferase superfamily. RNA methyltransferase RsmG family.

The protein localises to the cytoplasm. The enzyme catalyses guanosine(527) in 16S rRNA + S-adenosyl-L-methionine = N(7)-methylguanosine(527) in 16S rRNA + S-adenosyl-L-homocysteine. Its function is as follows. Specifically methylates the N7 position of guanine in position 527 of 16S rRNA. This Burkholderia cenocepacia (strain ATCC BAA-245 / DSM 16553 / LMG 16656 / NCTC 13227 / J2315 / CF5610) (Burkholderia cepacia (strain J2315)) protein is Ribosomal RNA small subunit methyltransferase G.